We begin with the raw amino-acid sequence, 310 residues long: Tyrosine recombinase XerC (310 aa).

In terms of domain architecture, Core-binding (CB) spans 1 to 92; it reads MDELIKEFDR…SLRAFFKYLH (92 aa). The 188-residue stretch at 113-300 folds into the Tyr recombinase domain; that stretch reads YIPAVLSVDE…SVNRLMAVYD (188 aa). Catalysis depends on residues R153, K177, H252, R255, and H278. Y287 acts as the O-(3'-phospho-DNA)-tyrosine intermediate in catalysis.

The protein belongs to the 'phage' integrase family. XerC subfamily. As to quaternary structure, forms a cyclic heterotetrameric complex composed of two molecules of XerC and two molecules of XerD.

It localises to the cytoplasm. Functionally, site-specific tyrosine recombinase, which acts by catalyzing the cutting and rejoining of the recombining DNA molecules. The XerC-XerD complex is essential to convert dimers of the bacterial chromosome into monomers to permit their segregation at cell division. It also contributes to the segregational stability of plasmids. This Syntrophus aciditrophicus (strain SB) protein is Tyrosine recombinase XerC.